The chain runs to 1000 residues: ATP-dependent DNA/RNA helicase DHX36 (1000 aa).

The required for recruitment to cytoplasmic stress granules stretch occupies residues 1 to 43; it reads MSYDYHQSWSRDGGPRGSGQGSGGGGGGSRGSGGGGGGRGGRG. The segment at 1 to 53 is disordered; sequence MSYDYHQSWSRDGGPRGSGQGSGGGGGGSRGSGGGGGGRGGRGRHPAHLKGRE. The required for the pre-miR-134 transport stretch occupies residues 1–96; that stretch reads MSYDYHQSWS…IVQLLNSVQA (96 aa). Residues 1 to 192 form a necessary for nuclear and nucleolar caps localizations region; sequence MSYDYHQSWS…KKTDPRYIEM (192 aa). The segment covering 15–40 has biased composition (gly residues); it reads PRGSGQGSGGGGGGSRGSGGGGGGRG. The segment at 45–67 is DSM (DHX36-specific motif); sequence HPAHLKGREIGLWYAKKQTQKNK. The tract at residues 45–97 is required for G4-DNA- and G4-RNA-binding; it reads HPAHLKGREIGLWYAKKQTQKNKEAERQERAVVHMDERREEQIVQLLNSVQAK. 2 recA-like domain regions span residues 98-378 and 379-620; these read NDKD…MIHI and PGFT…DYQL. At Ser-153 the chain carries Phosphoserine. The Helicase ATP-binding domain occupies 209–379; it reads VNLINNHQVT…FGNCPMIHIP (171 aa). 225-230 lines the ATP pocket; it reads GCGKTT. The segment at 257 to 309 is necessary for interaction with single-stranded DNA at the 3'-end of the G4-DNA structure; it reads RRISAISVAERVAAERAESCGNGNSTGYQIRLQSRLPRKQGSILYCTTGIILQ. The DEAH box motif lies at 326–329; the sequence is DEIH. The Mg(2+) site is built by Glu-327 and His-329. The region spanning 469 to 639 is the Helicase C-terminal domain; sequence ALIRYIVLEE…ELCLQIKILR (171 aa). Positions 490–549 are necessary for interaction with single-stranded DNA at the 3'-end of the G4-DNA structure; that stretch reads WDNISTLHDLLMSQVMFKSDRFLIIPLHSLMPTVNQTQVFKKTPPGVRKIVIATNIAETS. Residues 509 to 520 carry the Nuclear localization signal motif; the sequence is DRFLIIPLHSLM. ATP contacts are provided by residues Ser-549 and 594 to 597; that span reads RAGR. Residues 621 to 690 are WH domain; sequence PEILRTPLEE…LGVHLARLPV (70 aa). Necessary for interaction with single-stranded DNA at the 3'-end of the G4-DNA structure regions lie at residues 630-689, 841-852, and 862-892; these read ELCL…ARLP, NLGKKRKMVKVH, and HPKS…IYLY. The tract at residues 833-897 is OB-fold-like subdomains; it reads PKVAKIRLNL…SIYLYDCTEV (65 aa). Residue Lys-939 is modified to N6-acetyllysine.

In terms of assembly, found in a multi-helicase-TICAM1 complex at least composed of DHX36, DDX1, DDX21 and TICAM1; this complex exists in resting cells with or without dsRNA poly(I:C) ligand stimulation. Interacts (via C-terminus) with TICAM1 (via TIR domain). Interacts (via C-terminus) with DDX21; this interaction serves as bridges to TICAM1. Interacts with TERT; this interaction is dependent on the ability of DHX36 to bind to the G-quadruplex RNA (G4-RNA) structure present in the telomerase RNA template component (TERC). Interacts with DKC1; this interaction is dependent on the ability of DHX36 to bind to the G4-RNA structure present in TERC. Interacts with PARN; this interaction stimulates PARN to enhance uPA mRNA decay. Interacts with EXOSC3; this interaction occurs in a RNase-insensitive manner. Interacts with EXOSC10; this interaction occurs in a RNase-insensitive manner. Interacts with ILF3; this interaction occurs in a RNA-dependent manner. Interacts with ELAVL1; this interaction occurs in an RNA-dependent manner. Interacts with DDX5; this interaction occurs in a RNA-dependent manner. Interacts with DDX17; this interaction occurs in a RNA-dependent manner. Interacts with HDAC1; this interaction occurs in a RNA-dependent manner. Interacts with HDAC3; this interaction occurs in a RNA-dependent manner. Interacts with HDAC4. Interacts with AGO1. Interacts with AGO2. Interacts with ERCC6. It depends on Mg(2+) as a cofactor.

It localises to the nucleus. The protein resides in the cytoplasm. It is found in the cytosol. The protein localises to the stress granule. Its subcellular location is the nucleus speckle. It localises to the chromosome. The protein resides in the telomere. It is found in the mitochondrion. The protein localises to the perikaryon. Its subcellular location is the cell projection. It localises to the dendrite. The protein resides in the axon. It catalyses the reaction ATP + H2O = ADP + phosphate + H(+). With respect to regulation, ATPase activity is enhanced in the presence of homomeric poly(U) RNAs, but not by double-stranded DNA (dsDNA), double-stranded RNA (dsRNA) and tRNA. In terms of biological role, multifunctional ATP-dependent helicase that unwinds G-quadruplex (G4) structures. Plays a role in many biological processes such as genomic integrity, gene expression regulations and as a sensor to initiate antiviral responses. G4 structures correspond to helical structures containing guanine tetrads. Binds with high affinity to and unwinds G4 structures that are formed in nucleic acids (G4-DNA and G4-RNA). Plays a role in genomic integrity. Converts the G4-RNA structure present in telomerase RNA template component (TREC) into a double-stranded RNA to promote P1 helix formation that acts as a template boundary ensuring accurate reverse transcription. Plays a role in transcriptional regulation. Resolves G4-DNA structures in promoters of genes, such as YY1, KIT/c-kit and ALPL and positively regulates their expression. Plays a role in post-transcriptional regulation. Unwinds a G4-RNA structure located in the 3'-UTR polyadenylation site of the pre-mRNA TP53 and stimulates TP53 pre-mRNA 3'-end processing in response to ultraviolet (UV)-induced DNA damage. Binds to the precursor-microRNA-134 (pre-miR-134) terminal loop and regulates its transport into the synapto-dendritic compartment. Involved in the pre-miR-134-dependent inhibition of target gene expression and the control of dendritic spine size. Plays a role in the regulation of cytoplasmic mRNA translation and mRNA stability. Binds to both G4-RNA structures and alternative non-quadruplex-forming sequence within the 3'-UTR of the PITX1 mRNA regulating negatively PITX1 protein expression. Binds to both G4-RNA structure in the 5'-UTR and AU-rich elements (AREs) localized in the 3'-UTR of NKX2-5 mRNA to either stimulate protein translation or induce mRNA decay in an ELAVL1-dependent manner, respectively. Also binds to ARE sequences present in several mRNAs mediating exosome-mediated 3'-5' mRNA degradation. Involved in cytoplasmic urokinase-type plasminogen activator (uPA) mRNA decay. Component of a multi-helicase-TICAM1 complex that acts as a cytoplasmic sensor of viral double-stranded RNA (dsRNA) and plays a role in the activation of a cascade of antiviral responses including the induction of pro-inflammatory cytokines via the adapter molecule TICAM1. Required for the early embryonic development and hematopoiesis. Involved in the regulation of cardioblast differentiation and proliferation during heart development. Involved in spermatogonia differentiation. May play a role in ossification. The chain is ATP-dependent DNA/RNA helicase DHX36 from Rattus norvegicus (Rat).